A 480-amino-acid polypeptide reads, in one-letter code: tRNA-2-methylthio-N(6)-dimethylallyladenosine synthase (480 aa).

Positions 2 to 118 (NRVHIKTYGC…VPGYLDNLRA (117 aa)) constitute an MTTase N-terminal domain. The [4Fe-4S] cluster site is built by Cys-11, Cys-47, and Cys-81. Residues 145-169 (DHLLPQDSDSDSQPSTLNSQLRGAA) are disordered. The segment covering 149–159 (PQDSDSDSQPS) has biased composition (low complexity). The 235-residue stretch at 171-405 (PPPQITAFVS…LELLRQNSER (235 aa)) folds into the Radical SAM core domain. Cys-185, Cys-189, and Cys-192 together coordinate [4Fe-4S] cluster. The region spanning 408–470 (ALLLDTVEEV…VSTLYGELML (63 aa)) is the TRAM domain.

The protein belongs to the methylthiotransferase family. MiaB subfamily. In terms of assembly, monomer. It depends on [4Fe-4S] cluster as a cofactor.

The protein resides in the cytoplasm. It carries out the reaction N(6)-dimethylallyladenosine(37) in tRNA + (sulfur carrier)-SH + AH2 + 2 S-adenosyl-L-methionine = 2-methylsulfanyl-N(6)-dimethylallyladenosine(37) in tRNA + (sulfur carrier)-H + 5'-deoxyadenosine + L-methionine + A + S-adenosyl-L-homocysteine + 2 H(+). Catalyzes the methylthiolation of N6-(dimethylallyl)adenosine (i(6)A), leading to the formation of 2-methylthio-N6-(dimethylallyl)adenosine (ms(2)i(6)A) at position 37 in tRNAs that read codons beginning with uridine. The chain is tRNA-2-methylthio-N(6)-dimethylallyladenosine synthase from Opitutus terrae (strain DSM 11246 / JCM 15787 / PB90-1).